The sequence spans 862 residues: Cell surface glycoprotein (862 aa).

The first 34 residues, 1–34 (MTDTQQKIKAVLLTVLMVTSVFAATIAFSGAAAA), serve as a signal peptide directing secretion. Disordered stretches follow at residues 35 to 60 (SERGAGDSYTTGPTDGNQDNVDSAGN), 101 to 126 (ILLESPIPQDQPTGRYTANPGVEGTE), and 200 to 220 (VNTNVNNDDHPNPAADGDRDD). Residues 43-57 (YTTGPTDGNQDNVDS) are compositionally biased toward polar residues. Positions 206–220 (NDDHPNPAADGDRDD) are enriched in basic and acidic residues. Asn-442, Asn-520, Asn-550, Asn-702, and Asn-761 each carry an N-linked (GlcNAc...) asparagine glycan. Residues 752 to 838 (LSDENVEPGN…TEEATTEATG (87 aa)) are disordered. Positions 784 to 801 (SLEEEQPATDTPEPDTDT) are enriched in acidic residues. Over residues 802 to 815 (PEPATDTPEPATDT) the composition is skewed to low complexity. A compositionally biased stretch (acidic residues) spans 816–833 (PEPDTDTPEPDTETEEAT). A helical membrane pass occupies residues 838 to 858 (GPGFTAAIALIALVAAALLAV). The PGF sorting signal motif lies at 839-841 (PGF).

Belongs to the halobacterial S-layer protein family. In terms of processing, glycosylated. Cleaved by the archaeosortase ArtA at the C-terminus, with removal of a short hydrophobic segment. Post-translationally, lipidation.

The protein localises to the secreted. It localises to the cell wall. Its subcellular location is the S-layer. It is found in the cell membrane. In terms of biological role, S-layer protein. The S-layer is a paracrystalline mono-layered assembly of proteins which coat the surface of the cell. The sequence is that of Cell surface glycoprotein from Haloarcula japonica (strain ATCC 49778 / DSM 6131 / JCM 7785 / NBRC 101032 / NCIMB 13157 / TR-1).